The sequence spans 1099 residues: Protein transport protein Sec24A (1099 aa).

Disordered stretches follow at residues 1–36 (MSQPGIPASGGSSTGLQAQNGAASASGSPYTNGPVQ), 65–139 (KTLN…LPGA), and 279–317 (SQPTTKNPTMSRSVGYSYPSLPPGYQNTAPPSTTGAGLP). Polar residues-rich tracts occupy residues 10-20 (GGSSTGLQAQN), 68-90 (NPVSGQSNSGGSQTVSPLSNYQG), 108-126 (SLHSGPSPQMPLPTSQNPA), 279-292 (SQPTTKNPTMSRSV), and 303-317 (YQNTAPPSTTGAGLP). Zn(2+) contacts are provided by C437, C440, C458, and C461. The interval 437 to 461 (CRSCRTYINPFVSFLDQRRWKCNLC) is zinc finger-like. Residues 972–1044 (PQPPILQLSV…TPESARTIAF (73 aa)) form a Gelsolin-like repeat.

It belongs to the SEC23/SEC24 family. SEC24 subfamily. As to quaternary structure, COPII is composed of at least five proteins: the Sec23/24 complex, the Sec13/31 complex and Sar1. Interacts with TMED2. Interacts (as part of the Sec23/24 complex) with SEC22B; recruits SEC22B into COPII-coated vesicles for its transport from the endoplasmic reticulum to the Golgi. Interacts with STING1; promoting STING1 translocation to COPII vesicles in a STEEP1-dependent manner. Interacts with TMEM39A. Interacts with SACM1L; this interaction is reduced in the absence of TMEM39A. Interacts with kinase FAM20C; transport of FAM20C from the endoplasmic reticulum to the Golgi is likely to be mediated by COPII vesicles.

The protein resides in the cytoplasmic vesicle. The protein localises to the COPII-coated vesicle membrane. It is found in the endoplasmic reticulum membrane. It localises to the cytoplasm. Its subcellular location is the cytosol. In terms of biological role, component of the coat protein complex II (COPII) which promotes the formation of transport vesicles from the endoplasmic reticulum (ER). The coat has two main functions, the physical deformation of the endoplasmic reticulum membrane into vesicles and the selection of cargo molecules for their transport to the Golgi complex. Plays a central role in cargo selection within the COPII complex and together with SEC24B may have a different specificity compared to SEC24C and SEC24D. May package preferentially cargos with cytoplasmic DxE or LxxLE motifs and may also recognize conformational epitopes. The polypeptide is Protein transport protein Sec24A (Bos taurus (Bovine)).